Reading from the N-terminus, the 544-residue chain is Chaperonin GroEL (544 aa).

Residues 30–33 (TLGP), lysine 51, 87–91 (DGTTT), glycine 415, and aspartate 495 each bind ATP.

This sequence belongs to the chaperonin (HSP60) family. Forms a cylinder of 14 subunits composed of two heptameric rings stacked back-to-back. Interacts with the co-chaperonin GroES.

It localises to the cytoplasm. It catalyses the reaction ATP + H2O + a folded polypeptide = ADP + phosphate + an unfolded polypeptide.. In terms of biological role, together with its co-chaperonin GroES, plays an essential role in assisting protein folding. The GroEL-GroES system forms a nano-cage that allows encapsulation of the non-native substrate proteins and provides a physical environment optimized to promote and accelerate protein folding. The polypeptide is Chaperonin GroEL (Neisseria meningitidis serogroup A / serotype 4A (strain DSM 15465 / Z2491)).